The chain runs to 358 residues: MVNSLKKQTFTEMRPGVKVPAKETILTPRFYTTDFDEMAKMDISVNEDELMAILEEFRADYNRHHFVRNEEFAQSWDHIDGETRRLFVEFLERSCTAEFSGFLLYKELGRRLKNKSPILAECFTLMSRDEARHAGFLNKAMSDFNLSLDLGFLTKSRKYTFFKPKFIFYATYLSEKIGYWRYITIYRHLEAHPEDRIYPIFRFFENWCQDENRHGDFFDAIMRARPEFLNDWQAKLWCRFFLLSVFATMYLNDIQRADFYASIGLNACDYDKYVIEKTNETSGRVFPVILDVENPEFYARLEFCIKNNEKLTKIANSNNPGFVKFFQKFPLYLSNGWQFLKLYLMKPIETATMQSSVR.

It belongs to the AcsF family. Fe cation is required as a cofactor.

The catalysed reaction is Mg-protoporphyrin IX 13-monomethyl ester + 3 NADPH + 3 O2 + 2 H(+) = 3,8-divinyl protochlorophyllide a + 3 NADP(+) + 5 H2O. It functions in the pathway porphyrin-containing compound metabolism; chlorophyll biosynthesis (light-independent). Its function is as follows. Catalyzes the formation of the isocyclic ring in chlorophyll biosynthesis. Mediates the cyclase reaction, which results in the formation of divinylprotochlorophyllide (Pchlide) characteristic of all chlorophylls from magnesium-protoporphyrin IX 13-monomethyl ester (MgPMME). The chain is Magnesium-protoporphyrin IX monomethyl ester [oxidative] cyclase from Trichodesmium erythraeum (strain IMS101).